Reading from the N-terminus, the 117-residue chain is Minor capsid protein p17 (117 aa).

N12 carries an N-linked (GlcNAc...) asparagine; by host glycan. Residues 39–59 traverse the membrane as a helical segment; it reads AILLGILILLVIILIIVAIVY. The disordered stretch occupies residues 96-117; sequence KNSTSQQSHIPSDEQLAELAHS. An N-linked (GlcNAc...) asparagine; by host glycan is attached at N97.

This sequence belongs to the asfivirus minor capsid protein p17 family. Interacts with the minor capsid protein M1249L and with the hexon capsid protein p72 capsomers; these interactions form a rigid zipper structure that stabilizes the capsomers. Interacts with host STING1.

The protein resides in the virion membrane. The protein localises to the host endoplasmic reticulum membrane. In terms of biological role, together with the penton and the other minor capsid proteins (M1249L, p49), forms a complicated network immediately below the outer capsid shell, stabilizing the whole capsid. Three copies of p17 encircle each p72 capsomer in the inner capsid shell, anchoring p72 capsomers on the inner membrane. Required for the assembly of the capsid and icosahedral morphogenesis. Additionally, inhibits the host cGAS-STING pathway through its interaction with STING1 and subsequent interference of the recruitment of downstream components TBK1 and IKBKE. The sequence is that of Minor capsid protein p17 from African swine fever virus (isolate Warthog/Namibia/Wart80/1980) (ASFV).